The sequence spans 197 residues: uncharacterized protein (197 aa).

The next 4 helical transmembrane spans lie at 9–29, 67–87, 104–124, and 160–180; these read IYILQTLGSLYLLIVLLRFIL, LASLVLAILIQLVLMILILML, IIAVTSLFLKVFFFALIISVI, and GLDLSPIFAFLALKLIDMLVI.

The protein belongs to the YggT family.

The protein localises to the cell membrane. This is an uncharacterized protein from Pseudomonas aeruginosa (strain ATCC 15692 / DSM 22644 / CIP 104116 / JCM 14847 / LMG 12228 / 1C / PRS 101 / PAO1).